The following is a 141-amino-acid chain: Large ribosomal subunit protein uL16 (141 aa).

Residues 1–23 (MLMPKRTKYRKQMKGRNRGKAHR) form a disordered region.

Belongs to the universal ribosomal protein uL16 family. As to quaternary structure, part of the 50S ribosomal subunit.

Functionally, binds 23S rRNA and is also seen to make contacts with the A and possibly P site tRNAs. The sequence is that of Large ribosomal subunit protein uL16 from Helicobacter pylori (strain J99 / ATCC 700824) (Campylobacter pylori J99).